Here is a 506-residue protein sequence, read N- to C-terminus: 2-isopropylmalate synthase (506 aa).

In terms of domain architecture, Pyruvate carboxyltransferase spans isoleucine 4 to lysine 266. Aspartate 13, histidine 201, histidine 203, and asparagine 237 together coordinate Mn(2+). Positions asparagine 390–lysine 506 are regulatory domain.

It belongs to the alpha-IPM synthase/homocitrate synthase family. LeuA type 1 subfamily. Homodimer. The cofactor is Mn(2+).

It is found in the cytoplasm. The enzyme catalyses 3-methyl-2-oxobutanoate + acetyl-CoA + H2O = (2S)-2-isopropylmalate + CoA + H(+). Its pathway is amino-acid biosynthesis; L-leucine biosynthesis; L-leucine from 3-methyl-2-oxobutanoate: step 1/4. Catalyzes the condensation of the acetyl group of acetyl-CoA with 3-methyl-2-oxobutanoate (2-ketoisovalerate) to form 3-carboxy-3-hydroxy-4-methylpentanoate (2-isopropylmalate). The polypeptide is 2-isopropylmalate synthase (Bacillus thuringiensis (strain Al Hakam)).